A 267-amino-acid chain; its full sequence is Undecaprenyl-diphosphatase (267 aa).

A run of 8 helical transmembrane segments spans residues methionine 1 to isoleucine 21, glutamine 39 to phenylalanine 59, tryptophan 87 to isoleucine 107, leucine 111 to valine 131, alanine 149 to isoleucine 169, phenylalanine 189 to leucine 209, phenylalanine 218 to leucine 238, and methionine 246 to leucine 266.

It belongs to the UppP family.

The protein localises to the cell inner membrane. It catalyses the reaction di-trans,octa-cis-undecaprenyl diphosphate + H2O = di-trans,octa-cis-undecaprenyl phosphate + phosphate + H(+). In terms of biological role, catalyzes the dephosphorylation of undecaprenyl diphosphate (UPP). Confers resistance to bacitracin. This chain is Undecaprenyl-diphosphatase, found in Aliivibrio salmonicida (strain LFI1238) (Vibrio salmonicida (strain LFI1238)).